The sequence spans 277 residues: Alpha carbonic anhydrase 5 (277 aa).

A signal peptide spans Met1 to Ser22. The Alpha-carbonic anhydrase domain maps to Thr33 to Ile269. Cys58 and Cys219 are disulfide-bonded. Asn91 is a glycosylation site (N-linked (GlcNAc...) asparagine). The Proton acceptor role is filled by His99. N-linked (GlcNAc...) asparagine glycosylation is present at Asn117. Zn(2+) contacts are provided by His127, His129, and His146. A substrate-binding site is contributed by Thr215–Thr216.

This sequence belongs to the alpha-class carbonic anhydrase family. Zn(2+) serves as cofactor. Post-translationally, N-glycosylated.

Its subcellular location is the plastid. The protein resides in the chloroplast stroma. The catalysed reaction is hydrogencarbonate + H(+) = CO2 + H2O. Its function is as follows. Reversible hydration of carbon dioxide. The protein is Alpha carbonic anhydrase 5 (ACA5) of Arabidopsis thaliana (Mouse-ear cress).